Consider the following 207-residue polypeptide: 8-oxoguanine DNA glycosylase/AP lyase (207 aa).

Residues K128 and D146 contribute to the active site.

Belongs to the type-2 OGG1 family.

It carries out the reaction 2'-deoxyribonucleotide-(2'-deoxyribose 5'-phosphate)-2'-deoxyribonucleotide-DNA = a 3'-end 2'-deoxyribonucleotide-(2,3-dehydro-2,3-deoxyribose 5'-phosphate)-DNA + a 5'-end 5'-phospho-2'-deoxyribonucleoside-DNA + H(+). In terms of biological role, catalyzes the excision of an oxidatively damaged form of guanine (7,8-dihydro-8-oxoguanine = 8-oxoG) from DNA. Also cleaves the DNA backbone at apurinic/apyrimidinic sites (AP sites). The protein is 8-oxoguanine DNA glycosylase/AP lyase of Saccharolobus islandicus (strain Y.N.15.51 / Yellowstone #2) (Sulfolobus islandicus).